A 227-amino-acid polypeptide reads, in one-letter code: Phosphoglycolate phosphatase (227 aa).

Asp-13 acts as the Nucleophile in catalysis. Asp-13, Asp-15, and Asp-176 together coordinate Mg(2+).

This sequence belongs to the HAD-like hydrolase superfamily. CbbY/CbbZ/Gph/YieH family. Mg(2+) serves as cofactor.

The enzyme catalyses 2-phosphoglycolate + H2O = glycolate + phosphate. It functions in the pathway organic acid metabolism; glycolate biosynthesis; glycolate from 2-phosphoglycolate: step 1/1. Functionally, specifically catalyzes the dephosphorylation of 2-phosphoglycolate. Is involved in the dissimilation of the intracellular 2-phosphoglycolate formed during the DNA repair of 3'-phosphoglycolate ends, a major class of DNA lesions induced by oxidative stress. The sequence is that of Phosphoglycolate phosphatase from Nitrosospira multiformis (strain ATCC 25196 / NCIMB 11849 / C 71).